A 349-amino-acid polypeptide reads, in one-letter code: Quinolinate synthase (349 aa).

The iminosuccinate site is built by H52 and S69. C114 is a [4Fe-4S] cluster binding site. Iminosuccinate contacts are provided by residues 140-142 and S157; that span reads YVN. C201 provides a ligand contact to [4Fe-4S] cluster. Iminosuccinate-binding positions include 227-229 and T255; that span reads HPE. C300 contacts [4Fe-4S] cluster.

The protein belongs to the quinolinate synthase family. Type 2 subfamily. [4Fe-4S] cluster serves as cofactor.

Its subcellular location is the cytoplasm. The catalysed reaction is iminosuccinate + dihydroxyacetone phosphate = quinolinate + phosphate + 2 H2O + H(+). It participates in cofactor biosynthesis; NAD(+) biosynthesis; quinolinate from iminoaspartate: step 1/1. In terms of biological role, catalyzes the condensation of iminoaspartate with dihydroxyacetone phosphate to form quinolinate. This is Quinolinate synthase from Mycobacterium bovis (strain BCG / Tokyo 172 / ATCC 35737 / TMC 1019).